The following is a 397-amino-acid chain: Lysophospholipid transporter LplT (397 aa).

The Periplasmic segment spans residues 1 to 17 (MSESVHTNTSLWSKGMK). Residues 18–38 (AVIVAQFLSAFGDNALLFATL) traverse the membrane as a helical segment. Topologically, residues 39–52 (ALLKAQFYPEWSQP) are cytoplasmic. A helical transmembrane segment spans residues 53–73 (ILQMVFVGAYILFAPFVGQVA). The Periplasmic segment spans residues 74–90 (DSFAKGRVMMFANGLKL). A helical membrane pass occupies residues 91-111 (LGAASICFGINPFLGYTLVGV). Over 112–144 (GAAAYSPAKYGILGELTTGSKLVKANGLMEAST) the chain is Cytoplasmic. The helical transmembrane segment at 145 to 165 (IAAILLGSVAGGVLADWHVLV) threads the bilayer. A166 is a topological domain (periplasmic). A helical transmembrane segment spans residues 167-187 (LAACALAYGGAVVANIYIPKL). The Cytoplasmic portion of the chain corresponds to 188 to 226 (AAARPGQSWNLINMTRSFLNACTSLWRNGETRFSLVGTS). The chain crosses the membrane as a helical span at residues 227–247 (LFWGAGVTLRFLLVLWVPVAL). The Periplasmic segment spans residues 248–256 (GITDNATPT). The chain crosses the membrane as a helical span at residues 257–277 (YLNAMVAIGIVVGAGAAAKLV). The Cytoplasmic segment spans residues 278–280 (TLE). Residues 281–301 (TVSRCMPAGILIGVVVLIFSL) traverse the membrane as a helical segment. The Periplasmic portion of the chain corresponds to 302–304 (QHE). The chain crosses the membrane as a helical span at residues 305 to 325 (QLPAYALLMLIGVLGGFFVVP). Topologically, residues 326–343 (LNALLQERGKKSVGAGNA) are cytoplasmic. The helical transmembrane segment at 344–364 (IAVQNLGENSAMLLMLGIYSL) threads the bilayer. Residues 365–366 (AV) are Periplasmic-facing. The chain crosses the membrane as a helical span at residues 367–387 (MVGIPVVPIGIGFGALFALAI). The Cytoplasmic segment spans residues 388–397 (TALWIWQRRH).

Belongs to the major facilitator superfamily. LplT (TC 2.A.1.42) family.

The protein resides in the cell inner membrane. Its function is as follows. Catalyzes the facilitated diffusion of 2-acyl-glycero-3-phosphoethanolamine (2-acyl-GPE) into the cell. This chain is Lysophospholipid transporter LplT, found in Escherichia coli O157:H7 (strain EC4115 / EHEC).